The following is a 78-amino-acid chain: MEFKEQVLDLLADVAENDVVKENPDVEIFEEGIIDSFQTVGLLLEIQNRLGIEVSIMDFDRDEWATPNKIVEALEELR.

The region spanning 1–78 is the Carrier domain; that stretch reads MEFKEQVLDL…KIVEALEELR (78 aa). S36 carries the post-translational modification O-(pantetheine 4'-phosphoryl)serine.

It belongs to the DltC family. 4'-phosphopantetheine is transferred from CoA to a specific serine of apo-DCP.

It localises to the cytoplasm. The protein operates within cell wall biogenesis; lipoteichoic acid biosynthesis. In terms of biological role, carrier protein involved in the D-alanylation of lipoteichoic acid (LTA). The loading of thioester-linked D-alanine onto DltC is catalyzed by D-alanine--D-alanyl carrier protein ligase DltA. The DltC-carried D-alanyl group is further transferred to cell membrane phosphatidylglycerol (PG) by forming an ester bond, probably catalyzed by DltD. D-alanylation of LTA plays an important role in modulating the properties of the cell wall in Gram-positive bacteria, influencing the net charge of the cell wall. The sequence is that of D-alanyl carrier protein from Staphylococcus haemolyticus (strain JCSC1435).